The primary structure comprises 59 residues: Large ribosomal subunit protein bL35 (59 aa).

2 disordered regions span residues 1–22 (MKVK…IKRK) and 30–49 (APHK…TVSA). Residues 30–43 (APHKTTKQKRHLRK) are compositionally biased toward basic residues.

The protein belongs to the bacterial ribosomal protein bL35 family.

The protein is Large ribosomal subunit protein bL35 (rpmI) of Mycoplasma pneumoniae (strain ATCC 29342 / M129 / Subtype 1) (Mycoplasmoides pneumoniae).